The following is a 172-amino-acid chain: Scytalone dehydratase-like protein Arp1 (172 aa).

Y49 is a binding site for substrate. Active-site residues include H84 and H109. N130 contacts substrate.

This sequence belongs to the scytalone dehydratase family. As to quaternary structure, homotrimer. Each subunit contains an active site, located in the central part of the hydrophobic core of the monomer, which functions independently.

In terms of biological role, scytalone dehydratase-like protein; part of the Pks2 gene cluster that mediates the formation of infectious structures (appressoria), enabling these fungi to kill insects faster. The product of the Pks2 gene cluster is different from the one of Pks1 and has still not been identified. In Metarhizium guizhouense (strain ARSEF 977), this protein is Scytalone dehydratase-like protein Arp1.